The following is a 749-amino-acid chain: Disintegrin and metalloproteinase domain-containing protein 10 (749 aa).

An N-terminal signal peptide occupies residues M1–G18. Positions G19–R214 are excised as a propeptide. Residues G171–V178 carry the Cysteine switch motif. A Zn(2+)-binding site is contributed by C173. The Extracellular segment spans residues T215–E673. The region spanning N221 to G457 is the Peptidase M12B domain. 17 disulfides stabilise this stretch: C223-C314, C345-C452, C400-C436, C461-C496, C472-C485, C474-C480, C484-C516, C504-C512, C511-C537, C525-C544, C531-C563, C556-C568, C573-C599, C581-C608, C583-C598, C595-C640, and C633-C646. N-linked (GlcNAc...) asparagine glycosylation is found at N268 and N279. H384 contributes to the Zn(2+) binding site. The active site involves E385. Residues H388 and H394 each coordinate Zn(2+). N-linked (GlcNAc...) asparagine glycosylation occurs at N440. The Disintegrin domain occupies Q458–N552. N-linked (GlcNAc...) asparagine glycosylation is present at N552. Residues W674 to I697 form a helical membrane-spanning segment. Residues K698 to R749 lie on the Cytoplasmic side of the membrane. Positions P705–R749 are disordered. The SH3-binding signature appears at P709 to P716. T720 is modified (phosphothreonine). The SH3-binding motif lies at R723–P729. Positions R735–R749 are interaction with AP2A1, AP2A2 and AP2M1.

In terms of assembly, forms a ternary EFNA5-EPHA3-ADAM10 complex mediating EFNA5 extracellular domain shedding by ADAM10 which regulates the EFNA5-EPHA3 complex internalization and function, the cleavage occurs in trans, with ADAM10 and its substrate being on the membranes of opposing cells. Interacts with the clathrin adapter AP2 complex subunits AP2A1, AP2A2, AP2B1, and AP2M1; this interaction facilitates ADAM10 endocytosis from the plasma membrane during long-term potentiation in hippocampal neurons. Forms a ternary complex composed of ADAM10, EPHA4 and CADH1; within the complex, ADAM10 cleaves CADH1 which disrupts adherens junctions. Interacts with EPHA2. Interacts with NGF in a divalent cation-dependent manner. Interacts with TSPAN14; the interaction promotes ADAM10 maturation and cell surface expression. Interacts with TSPAN5, TSPAN10, TSPAN14, TSPAN15, TSPAN17 and TSPAN33; these interactions regulate ADAM10 substrate specificity, endocytosis and turnover. Interacts (via extracellular domain) with TSPAN33 (via extracellular domain) and (via cytoplasmic domain) with AFDN; interaction with TSPAN33 allows the docking of ADAM10 to zonula adherens through a PDZ11-dependent interaction between TSPAN33 and PLEKHA7 while interaction with AFDN locks ADAM10 at zonula adherens. Interacts with DLG1; this interaction recruits ADAM10 to the cell membrane during long-term depression in hippocampal neurons. Interacts (via extracellular domain) with BACE1 (via extracellular domain). Interacts with FAM171A1. Requires Zn(2+) as cofactor. Post-translationally, the precursor is cleaved by furin and PCSK7. Expressed in brain, kidney, lung, spleen, ovary and testis.

It localises to the cell membrane. The protein resides in the golgi apparatus membrane. Its subcellular location is the cytoplasmic vesicle. It is found in the clathrin-coated vesicle. The protein localises to the cell projection. It localises to the axon. The protein resides in the dendrite. Its subcellular location is the cell junction. It is found in the adherens junction. The protein localises to the cytoplasm. The enzyme catalyses Endopeptidase of broad specificity.. Catalytically inactive when the propeptide is intact and associated with the mature enzyme. The disintegrin and cysteine-rich regions modulate access of substrates to exerts an inhibitory effect on the cleavage of ADAM10 substrates. Its function is as follows. Transmembrane metalloprotease which mediates the ectodomain shedding of a myriad of transmembrane proteins, including adhesion proteins, growth factor precursors and cytokines being essential for development and tissue homeostasis. Associates with six members of the tetraspanin superfamily TspanC8 which regulate its exit from the endoplasmic reticulum and its substrate selectivity. Cleaves the membrane-bound precursor of TNF-alpha at '76-Ala-|-Val-77' to its mature soluble form. Responsible for the proteolytical release of soluble JAM3 from endothelial cells surface. Responsible for the proteolytic release of several other cell-surface proteins, including heparin-binding epidermal growth-like factor, ephrin-A2, CD44, CDH2 and for constitutive and regulated alpha-secretase cleavage of amyloid precursor protein (APP). Contributes to the normal cleavage of the cellular prion protein. Involved in the cleavage of the adhesion molecule L1 at the cell surface and in released membrane vesicles, suggesting a vesicle-based protease activity. Also controls the proteolytic processing of Notch and mediates lateral inhibition during neurogenesis. Required for the development of type 1 transitional B cells into marginal zone B cells, probably by cleaving Notch. Responsible for the FasL ectodomain shedding and for the generation of the remnant ADAM10-processed FasL (FasL APL) transmembrane form. Also cleaves the ectodomain of the integral membrane proteins CORIN and ITM2B. Mediates the proteolytic cleavage of LAG3, leading to release the secreted form of LAG3. Mediates the proteolytic cleavage of IL6R and IL11RA, leading to the release of secreted forms of IL6R and IL11RA. Enhances the cleavage of CHL1 by BACE1. Cleaves NRCAM. Cleaves TREM2, resulting in shedding of the TREM2 ectodomain. Involved in the development and maturation of glomerular and coronary vasculature. During development of the cochlear organ of Corti, promotes pillar cell separation by forming a ternary complex with CADH1 and EPHA4 and cleaving CADH1 at adherens junctions. May regulate the EFNA5-EPHA3 signaling. Regulates leukocyte transmigration as a sheddase for the adherens junction protein VE-cadherin/CDH5 in endothelial cells. This is Disintegrin and metalloproteinase domain-containing protein 10 (Adam10) from Rattus norvegicus (Rat).